A 127-amino-acid chain; its full sequence is S-adenosylmethionine decarboxylase proenzyme 2 (127 aa).

Ser-63 functions as the Schiff-base intermediate with substrate; via pyruvic acid in the catalytic mechanism. A Pyruvic acid (Ser); by autocatalysis modification is found at Ser-63. His-68 serves as the catalytic Proton acceptor; for processing activity. Cys-83 functions as the Proton donor; for catalytic activity in the catalytic mechanism.

This sequence belongs to the prokaryotic AdoMetDC family. Type 1 subfamily. Heterotetramer of two alpha and two beta chains arranged as a dimer of alpha/beta heterodimers. Requires pyruvate as cofactor. Post-translationally, is synthesized initially as an inactive proenzyme. Formation of the active enzyme involves a self-maturation process in which the active site pyruvoyl group is generated from an internal serine residue via an autocatalytic post-translational modification. Two non-identical subunits are generated from the proenzyme in this reaction, and the pyruvate is formed at the N-terminus of the alpha chain, which is derived from the carboxyl end of the proenzyme. The post-translation cleavage follows an unusual pathway, termed non-hydrolytic serinolysis, in which the side chain hydroxyl group of the serine supplies its oxygen atom to form the C-terminus of the beta chain, while the remainder of the serine residue undergoes an oxidative deamination to produce ammonia and the pyruvoyl group blocking the N-terminus of the alpha chain.

The enzyme catalyses S-adenosyl-L-methionine + H(+) = S-adenosyl 3-(methylsulfanyl)propylamine + CO2. It functions in the pathway amine and polyamine biosynthesis; S-adenosylmethioninamine biosynthesis; S-adenosylmethioninamine from S-adenosyl-L-methionine: step 1/1. Its function is as follows. Catalyzes the decarboxylation of S-adenosylmethionine to S-adenosylmethioninamine (dcAdoMet), the propylamine donor required for the synthesis of the polyamines spermine and spermidine from the diamine putrescine. The polypeptide is S-adenosylmethionine decarboxylase proenzyme 2 (Halalkalibacterium halodurans (strain ATCC BAA-125 / DSM 18197 / FERM 7344 / JCM 9153 / C-125) (Bacillus halodurans)).